The following is a 460-amino-acid chain: Bifunctional protein GlmU (460 aa).

A pyrophosphorylase region spans residues 1 to 229; that stretch reads MSNYAIILAA…FEESLGVNDR (229 aa). UDP-N-acetyl-alpha-D-glucosamine is bound by residues 8–11, Lys-22, Gln-72, and 77–78; these read LAAG and GT. Asp-102 provides a ligand contact to Mg(2+). The UDP-N-acetyl-alpha-D-glucosamine site is built by Gly-139, Glu-154, Asn-169, and Asn-227. Asn-227 is a binding site for Mg(2+). The interval 230-250 is linker; it reads VALATAEDVMRRRINKTHMIN. Residues 251–460 are N-acetyltransferase; that stretch reads GVTFQNPNAT…KKPHHPSQQK (210 aa). Arg-332 and Lys-350 together coordinate UDP-N-acetyl-alpha-D-glucosamine. The active-site Proton acceptor is the His-362. UDP-N-acetyl-alpha-D-glucosamine is bound by residues Tyr-365 and Asn-376. Residues Ala-379, 385–386, Ser-404, Ala-422, and Arg-439 contribute to the acetyl-CoA site; that span reads NY.

The protein in the N-terminal section; belongs to the N-acetylglucosamine-1-phosphate uridyltransferase family. This sequence in the C-terminal section; belongs to the transferase hexapeptide repeat family. In terms of assembly, homotrimer. Mg(2+) serves as cofactor.

It is found in the cytoplasm. It carries out the reaction alpha-D-glucosamine 1-phosphate + acetyl-CoA = N-acetyl-alpha-D-glucosamine 1-phosphate + CoA + H(+). It catalyses the reaction N-acetyl-alpha-D-glucosamine 1-phosphate + UTP + H(+) = UDP-N-acetyl-alpha-D-glucosamine + diphosphate. It participates in nucleotide-sugar biosynthesis; UDP-N-acetyl-alpha-D-glucosamine biosynthesis; N-acetyl-alpha-D-glucosamine 1-phosphate from alpha-D-glucosamine 6-phosphate (route II): step 2/2. The protein operates within nucleotide-sugar biosynthesis; UDP-N-acetyl-alpha-D-glucosamine biosynthesis; UDP-N-acetyl-alpha-D-glucosamine from N-acetyl-alpha-D-glucosamine 1-phosphate: step 1/1. It functions in the pathway bacterial outer membrane biogenesis; LPS lipid A biosynthesis. Catalyzes the last two sequential reactions in the de novo biosynthetic pathway for UDP-N-acetylglucosamine (UDP-GlcNAc). The C-terminal domain catalyzes the transfer of acetyl group from acetyl coenzyme A to glucosamine-1-phosphate (GlcN-1-P) to produce N-acetylglucosamine-1-phosphate (GlcNAc-1-P), which is converted into UDP-GlcNAc by the transfer of uridine 5-monophosphate (from uridine 5-triphosphate), a reaction catalyzed by the N-terminal domain. The polypeptide is Bifunctional protein GlmU (Streptococcus thermophilus (strain ATCC BAA-491 / LMD-9)).